We begin with the raw amino-acid sequence, 228 residues long: Uracil-DNA glycosylase (228 aa).

D64 serves as the catalytic Proton acceptor.

This sequence belongs to the uracil-DNA glycosylase (UDG) superfamily. UNG family.

The protein resides in the cytoplasm. The catalysed reaction is Hydrolyzes single-stranded DNA or mismatched double-stranded DNA and polynucleotides, releasing free uracil.. Excises uracil residues from the DNA which can arise as a result of misincorporation of dUMP residues by DNA polymerase or due to deamination of cytosine. This is Uracil-DNA glycosylase from Yersinia pseudotuberculosis serotype IB (strain PB1/+).